The chain runs to 163 residues: NADH-quinone oxidoreductase subunit I (163 aa).

4Fe-4S ferredoxin-type domains lie at 54–84 (LRRY…IESD) and 94–123 (TRYD…ETHI). 8 residues coordinate [4Fe-4S] cluster: C64, C67, C70, C74, C103, C106, C109, and C113.

It belongs to the complex I 23 kDa subunit family. In terms of assembly, NDH-1 is composed of 14 different subunits. Subunits NuoA, H, J, K, L, M, N constitute the membrane sector of the complex. [4Fe-4S] cluster serves as cofactor.

The protein resides in the cell inner membrane. The enzyme catalyses a quinone + NADH + 5 H(+)(in) = a quinol + NAD(+) + 4 H(+)(out). Its function is as follows. NDH-1 shuttles electrons from NADH, via FMN and iron-sulfur (Fe-S) centers, to quinones in the respiratory chain. The immediate electron acceptor for the enzyme in this species is believed to be ubiquinone. Couples the redox reaction to proton translocation (for every two electrons transferred, four hydrogen ions are translocated across the cytoplasmic membrane), and thus conserves the redox energy in a proton gradient. This chain is NADH-quinone oxidoreductase subunit I, found in Ralstonia nicotianae (strain ATCC BAA-1114 / GMI1000) (Ralstonia solanacearum).